A 223-amino-acid polypeptide reads, in one-letter code: Deoxyribose-phosphate aldolase (223 aa).

Asp-91 acts as the Proton donor/acceptor in catalysis. Catalysis depends on Lys-154, which acts as the Schiff-base intermediate with acetaldehyde. The Proton donor/acceptor role is filled by Lys-183.

Belongs to the DeoC/FbaB aldolase family. DeoC type 1 subfamily.

The protein localises to the cytoplasm. It carries out the reaction 2-deoxy-D-ribose 5-phosphate = D-glyceraldehyde 3-phosphate + acetaldehyde. It functions in the pathway carbohydrate degradation; 2-deoxy-D-ribose 1-phosphate degradation; D-glyceraldehyde 3-phosphate and acetaldehyde from 2-deoxy-alpha-D-ribose 1-phosphate: step 2/2. Its function is as follows. Catalyzes a reversible aldol reaction between acetaldehyde and D-glyceraldehyde 3-phosphate to generate 2-deoxy-D-ribose 5-phosphate. This is Deoxyribose-phosphate aldolase from Lysinibacillus sphaericus (strain C3-41).